Here is a 362-residue protein sequence, read N- to C-terminus: Homeobox protein extradenticle (362 aa).

In terms of domain architecture, PBC spans 34-225 (PRKQDIGEIL…VMILRSRFLD (192 aa)). The interval 41–120 (EILQQIMNIT…EGVAGPEKGG (80 aa)) is PBC-A. The PBC-B stretch occupies residues 123–225 (DFLSQSDLTG…VMILRSRFLD (103 aa)). The homeobox; TALE-type DNA-binding region spans 226–288 (ARRKRRNFSK…NKRIRYKKNI (63 aa)). The interval 305–362 (GASPYSMGGPPSGAATPMMSPAPAQDSMGYSLGSGGYDQQQPYDGSMGYDQLHQDLSP) is disordered.

Belongs to the TALE/PBX homeobox family.

The protein resides in the nucleus. Transcription factor which acts with the selector homeodomain proteins altering the regulation of downstream target genes such as wingless (wg), teashirt (tsh) and decapentaplegic (dpp), thus affecting segmental identity. The protein is Homeobox protein extradenticle of Anopheles gambiae (African malaria mosquito).